Reading from the N-terminus, the 610-residue chain is UvrABC system protein C (610 aa).

Residues 16–94 (SQPGVYRMYD…IKLYQPRYNV (79 aa)) enclose the GIY-YIG domain. The UVR domain occupies 204 to 239 (QQVLTQLITRMEEASQQLHFEDAARIRDQIQAVRRV).

Belongs to the UvrC family. As to quaternary structure, interacts with UvrB in an incision complex.

It is found in the cytoplasm. Functionally, the UvrABC repair system catalyzes the recognition and processing of DNA lesions. UvrC both incises the 5' and 3' sides of the lesion. The N-terminal half is responsible for the 3' incision and the C-terminal half is responsible for the 5' incision. The protein is UvrABC system protein C of Yersinia pseudotuberculosis serotype O:1b (strain IP 31758).